The sequence spans 342 residues: MITPQQAIERLISNNELFYDEMTDLMRQMMSGKVPPEQIAAILTGLRIKVETVSEITAAAAVMCEFASKVPLEDADGLVDIVGTGGDGAKTFNISTTSMFVAAAAGAKVAKHGGRSVSSSSGAADVMEQMGANLNLTPEQIAQSIRQTGIGFMFAPNHHSAMRHVAPVRRSLGFRSIFNILGPLTNPAGAPNQLLGVFHTDLCGILSRVLQQLGSKHVLVVCGEGGLDEITLTGKTRVAELKDGKISEYDIRPEDFGIETRRNLDEIKVANTQESLLKMNEVLDGKEGAARDIVLLNTAAALYAGNIAASLSDGISAAREGIDSGRAKAKKEEFVGFTRQFA.

5-phospho-alpha-D-ribose 1-diphosphate-binding positions include glycine 83, 86–87, threonine 91, 93–96, 111–119, and alanine 123; these read GD, NIST, and KHGGRSVSS. Glycine 83 contributes to the anthranilate binding site. Position 95 (serine 95) interacts with Mg(2+). Arginine 169 contributes to the anthranilate binding site. The Mg(2+) site is built by aspartate 228 and glutamate 229.

This sequence belongs to the anthranilate phosphoribosyltransferase family. As to quaternary structure, homodimer. Requires Mg(2+) as cofactor.

The enzyme catalyses N-(5-phospho-beta-D-ribosyl)anthranilate + diphosphate = 5-phospho-alpha-D-ribose 1-diphosphate + anthranilate. It functions in the pathway amino-acid biosynthesis; L-tryptophan biosynthesis; L-tryptophan from chorismate: step 2/5. Its function is as follows. Catalyzes the transfer of the phosphoribosyl group of 5-phosphorylribose-1-pyrophosphate (PRPP) to anthranilate to yield N-(5'-phosphoribosyl)-anthranilate (PRA). This Neisseria gonorrhoeae (strain ATCC 700825 / FA 1090) protein is Anthranilate phosphoribosyltransferase.